The sequence spans 398 residues: Phytoene synthase 2, chloroplastic (398 aa).

The transit peptide at 1-80 directs the protein to the chloroplast; that stretch reads MASSSSAAAL…EEAVYEVVLR (80 aa).

It belongs to the phytoene/squalene synthase family. As to expression, expressed in leaves and endosperm. Expressed in developing leaves.

The protein resides in the plastid. It localises to the chloroplast membrane. Its subcellular location is the chloroplast. It is found in the plastoglobule. It catalyses the reaction 2 (2E,6E,10E)-geranylgeranyl diphosphate = 15-cis-phytoene + 2 diphosphate. Catalyzes the conversion of geranylgeranyl diphosphate to phytoene. Mediates the first committed step in carotenoid biosynthesis. The polypeptide is Phytoene synthase 2, chloroplastic (Oryza sativa subsp. japonica (Rice)).